Reading from the N-terminus, the 438-residue chain is Xylose isomerase (438 aa).

Residues His-103 and Asp-106 contribute to the active site. Residues Glu-234, Glu-270, His-273, Asp-298, Asp-309, Asp-311, and Asp-341 each coordinate Mg(2+).

This sequence belongs to the xylose isomerase family. As to quaternary structure, homotetramer. Requires Mg(2+) as cofactor.

The protein resides in the cytoplasm. The enzyme catalyses alpha-D-xylose = alpha-D-xylulofuranose. The protein is Xylose isomerase of Phocaeicola vulgatus (strain ATCC 8482 / DSM 1447 / JCM 5826 / CCUG 4940 / NBRC 14291 / NCTC 11154) (Bacteroides vulgatus).